The primary structure comprises 160 residues: Phosphopantetheine adenylyltransferase (160 aa).

Position 10 (Thr10) interacts with substrate. ATP contacts are provided by residues 10-11 and His18; that span reads TF. The substrate site is built by Lys42, Leu74, and Arg88. ATP is bound by residues 89–91, Glu99, and 124–130; these read GLR and HGFLSST.

It belongs to the bacterial CoaD family. In terms of assembly, homohexamer. The cofactor is Mg(2+).

The protein localises to the cytoplasm. It catalyses the reaction (R)-4'-phosphopantetheine + ATP + H(+) = 3'-dephospho-CoA + diphosphate. It functions in the pathway cofactor biosynthesis; coenzyme A biosynthesis; CoA from (R)-pantothenate: step 4/5. Reversibly transfers an adenylyl group from ATP to 4'-phosphopantetheine, yielding dephospho-CoA (dPCoA) and pyrophosphate. This chain is Phosphopantetheine adenylyltransferase, found in Aliivibrio fischeri (strain MJ11) (Vibrio fischeri).